The following is a 292-amino-acid chain: 11-beta-hydroxysteroid dehydrogenase 1 (292 aa).

Residues 1–7 (MAFMKKY) lie on the Cytoplasmic side of the membrane. A helical; Signal-anchor for type II membrane protein transmembrane segment spans residues 8–24 (LLPILGLFMAYYYYSAN). Over 25-292 (EEFRPEMLQG…SYNMDRFINK (268 aa)) the chain is Lumenal. NADP(+)-binding positions include 41 to 67 (GASKGIGREMAYHLAKMGAHVVVTARS), 92 to 93 (TM), and 119 to 121 (NHI). N123 and N162 each carry an N-linked (GlcNAc...) asparagine glycan. Residue S170 participates in substrate binding. Y183 (proton acceptor) is an active-site residue. Position 183-187 (183-187 (YSASK)) interacts with NADP(+). N-linked (GlcNAc...) asparagine glycosylation occurs at N207. Residue 218–222 (IDTET) participates in NADP(+) binding.

This sequence belongs to the short-chain dehydrogenases/reductases (SDR) family. Homodimer. In terms of processing, glycosylated. Widely expressed, highest expression in liver, lower in testis, ovary, lung, foreskin fibroblasts, and much lower in kidney. Expressed in liver (at protein level). Expressed in the basal cells of the corneal epithelium and in the ciliary nonpigmented epithelium (both at mRNA and at protein level).

Its subcellular location is the endoplasmic reticulum membrane. It catalyses the reaction an 11beta-hydroxysteroid + NADP(+) = an 11-oxosteroid + NADPH + H(+). It carries out the reaction cortisone + NADPH + H(+) = cortisol + NADP(+). The catalysed reaction is corticosterone + NADP(+) = 11-dehydrocorticosterone + NADPH + H(+). The enzyme catalyses a 7beta-hydroxysteroid + NADP(+) = a 7-oxosteroid + NADPH + H(+). It catalyses the reaction 7-oxocholesterol + NADPH + H(+) = 7beta-hydroxycholesterol + NADP(+). It carries out the reaction chenodeoxycholate + NADP(+) = 7-oxolithocholate + NADPH + H(+). The catalysed reaction is 7-oxolithocholate + NADPH + H(+) = ursodeoxycholate + NADP(+). The enzyme catalyses glycochenodeoxycholate + NADP(+) = 7-oxoglycolithocholate + NADPH + H(+). It catalyses the reaction taurochenodeoxycholate + NADP(+) = 7-oxotaurolithocholate + NADPH + H(+). It carries out the reaction tauroursodeoxycholate + NADP(+) = 7-oxotaurolithocholate + NADPH + H(+). The catalysed reaction is glycoursodeoxycholate + NADP(+) = 7-oxoglycolithocholate + NADPH + H(+). The enzyme catalyses 7-oxopregnenolone + NADPH + H(+) = 7beta-hydroxypregnenolone + NADP(+). It catalyses the reaction 3beta,7alpha-dihydroxyandrost-5-en-17-one + NADP(+) = 3beta-hydroxy-5-androstene-7,17-dione + NADPH + H(+). It carries out the reaction 3beta-hydroxy-5-androstene-7,17-dione + NADPH + H(+) = 3beta,7beta-dihydroxyandrost-5-en-17-one + NADP(+). The catalysed reaction is 3beta-hydroxy-5alpha-androstane-7,17-dione + NADPH + H(+) = 3beta,7beta-dihydroxy-5alpha-androstan-17-one + NADP(+). Its pathway is steroid metabolism. Hexose-6-phosphate dehydrogenase (H6PD) provides cosubstrate NADPH, and the glucose-6-phosphate transporter in the ER-membrane supplies the substrate for H6PDH, their activities stimulate the reduction of cortisone and abolish the oxidation of cortisol. Its function is as follows. Controls the reversible conversion of biologically active glucocorticoids such as cortisone to cortisol, and 11-dehydrocorticosterone to corticosterone in the presence of NADP(H). Participates in the corticosteroid receptor-mediated anti-inflammatory response, as well as metabolic and homeostatic processes. Plays a role in the secretion of aqueous humor in the eye, maintaining a normotensive, intraocular environment. Bidirectional in vitro, predominantly functions as a reductase in vivo, thereby increasing the concentration of active glucocorticoids. It has broad substrate specificity, besides glucocorticoids, it accepts other steroid and sterol substrates. Interconverts 7-oxo- and 7-hydroxy-neurosteroids such as 7-oxopregnenolone and 7beta-hydroxypregnenolone, 7-oxodehydroepiandrosterone (3beta-hydroxy-5-androstene-7,17-dione) and 7beta-hydroxydehydroepiandrosterone (3beta,7beta-dihydroxyandrost-5-en-17-one), among others. Catalyzes the stereo-specific conversion of the major dietary oxysterol, 7-ketocholesterol (7-oxocholesterol), into the more polar 7-beta-hydroxycholesterol metabolite. 7-oxocholesterol is one of the most important oxysterols, it participates in several events such as induction of apoptosis, accumulation in atherosclerotic lesions, lipid peroxidation, and induction of foam cell formation. Mediates the 7-oxo reduction of 7-oxolithocholate mainly to chenodeoxycholate, and to a lesser extent to ursodeoxycholate, both in its free form and when conjugated to glycine or taurine, providing a link between glucocorticoid activation and bile acid metabolism. Catalyzes the synthesis of 7-beta-25-dihydroxycholesterol from 7-oxo-25-hydroxycholesterol in vitro, which acts as a ligand for the G-protein-coupled receptor (GPCR) Epstein-Barr virus-induced gene 2 (EBI2) and may thereby regulate immune cell migration. This chain is 11-beta-hydroxysteroid dehydrogenase 1, found in Homo sapiens (Human).